Reading from the N-terminus, the 52-residue chain is Large ribosomal subunit protein eL39 (52 aa).

Belongs to the eukaryotic ribosomal protein eL39 family.

This Caldivirga maquilingensis (strain ATCC 700844 / DSM 13496 / JCM 10307 / IC-167) protein is Large ribosomal subunit protein eL39.